A 570-amino-acid polypeptide reads, in one-letter code: Glutamate--tRNA ligase (570 aa).

The 'HIGH' region motif lies at 107-117 (PNPDFVLHLGS).

The protein belongs to the class-I aminoacyl-tRNA synthetase family. Glutamate--tRNA ligase type 2 subfamily.

The protein localises to the cytoplasm. It catalyses the reaction tRNA(Glu) + L-glutamate + ATP = L-glutamyl-tRNA(Glu) + AMP + diphosphate. Catalyzes the attachment of glutamate to tRNA(Glu) in a two-step reaction: glutamate is first activated by ATP to form Glu-AMP and then transferred to the acceptor end of tRNA(Glu). The chain is Glutamate--tRNA ligase from Pyrobaculum islandicum (strain DSM 4184 / JCM 9189 / GEO3).